The chain runs to 396 residues: Elongation factor Tu (396 aa).

A tr-type G domain is found at 10 to 206; sequence KPHVNVGTIG…ALDTYIPTPE (197 aa). The tract at residues 19–26 is G1; sequence GHVDHGKT. GTP is bound at residue 19 to 26; that stretch reads GHVDHGKT. Mg(2+) is bound at residue threonine 26. The G2 stretch occupies residues 60-64; the sequence is GITIN. Positions 81–84 are G3; the sequence is DCPG. Residues 81 to 85 and 136 to 139 contribute to the GTP site; these read DCPGH and NKCD. The tract at residues 136-139 is G4; sequence NKCD. Positions 174 to 176 are G5; sequence SAK.

Belongs to the TRAFAC class translation factor GTPase superfamily. Classic translation factor GTPase family. EF-Tu/EF-1A subfamily. Monomer.

Its subcellular location is the cytoplasm. The enzyme catalyses GTP + H2O = GDP + phosphate + H(+). GTP hydrolase that promotes the GTP-dependent binding of aminoacyl-tRNA to the A-site of ribosomes during protein biosynthesis. The sequence is that of Elongation factor Tu from Cupriavidus necator (strain ATCC 17699 / DSM 428 / KCTC 22496 / NCIMB 10442 / H16 / Stanier 337) (Ralstonia eutropha).